We begin with the raw amino-acid sequence, 552 residues long: Chaperonin GroEL (552 aa).

Residues 30-33 (TLGP), lysine 51, 87-91 (DGTTT), glycine 415, 480-482 (NAA), and aspartate 496 each bind ATP.

It belongs to the chaperonin (HSP60) family. Forms a cylinder of 14 subunits composed of two heptameric rings stacked back-to-back. Interacts with the co-chaperonin GroES.

The protein localises to the cytoplasm. It catalyses the reaction ATP + H2O + a folded polypeptide = ADP + phosphate + an unfolded polypeptide.. Functionally, together with its co-chaperonin GroES, plays an essential role in assisting protein folding. The GroEL-GroES system forms a nano-cage that allows encapsulation of the non-native substrate proteins and provides a physical environment optimized to promote and accelerate protein folding. This chain is Chaperonin GroEL, found in Coxiella burnetii (strain RSA 493 / Nine Mile phase I).